The primary structure comprises 265 residues: U6 snRNA phosphodiesterase 1 (265 aa).

The tract at residues 1-67 is disordered; sequence MSAAPLVGYS…EGPVDDSAKH (67 aa). Basic and acidic residues predominate over residues 20 to 32; the sequence is AGARVRPGAEGRS. Catalysis depends on His120, which acts as the Proton acceptor. 120–122 is a binding site for AMP; sequence HLS. Residues Gln164, Tyr202, and 206–210 contribute to the UMP site; that span reads SFHIS. AMP-binding positions include Tyr202 and 204-210; that span reads DPSFHIS. His208 (proton donor) is an active-site residue.

The protein belongs to the 2H phosphoesterase superfamily. USB1 family. Interacts with PLRG1, CDC5L and PRPF19.

Its subcellular location is the nucleus. The enzyme catalyses a 3'-end uridylyl-uridine-RNA = a 3'-end 2',3'-cyclophospho-uridine-RNA + uridine. It carries out the reaction a 3'-end uridylyl-adenosine-RNA = a 3'-end 2',3'-cyclophospho-uridine-RNA + adenosine. Its function is as follows. 3'-5' RNA exonuclease that trims the 3' end of oligo(U) and oligo(A) tracts of the pre-U6 small nuclear RNA (snRNA) molecule, leading to the formation of a mature U6 snRNA 3' end-terminated with a 2',3'-cyclic phosphate. Participates in the U6 snRNA 3' end processing that prevents U6 snRNA degradation. In addition also removes uridines from the 3' end of U6atac snRNA and possibly the vault RNA VTRNA1-1. The polypeptide is U6 snRNA phosphodiesterase 1 (Bos taurus (Bovine)).